Consider the following 335-residue polypeptide: Ketol-acid reductoisomerase (NADP(+)) 2 (335 aa).

One can recognise a KARI N-terminal Rossmann domain in the interval Met-1–Thr-180. Residues Tyr-24–Gln-27, Arg-47, Ser-51, and Asp-81–Gln-84 each bind NADP(+). Residue His-106 is part of the active site. Position 132 (Gly-132) interacts with NADP(+). Positions Thr-181–Ile-326 constitute a KARI C-terminal knotted domain. Residues Asp-189, Glu-193, Glu-225, and Glu-229 each coordinate Mg(2+). Ser-250 is a binding site for substrate.

Belongs to the ketol-acid reductoisomerase family. Mg(2+) serves as cofactor.

It carries out the reaction (2R)-2,3-dihydroxy-3-methylbutanoate + NADP(+) = (2S)-2-acetolactate + NADPH + H(+). The enzyme catalyses (2R,3R)-2,3-dihydroxy-3-methylpentanoate + NADP(+) = (S)-2-ethyl-2-hydroxy-3-oxobutanoate + NADPH + H(+). It participates in amino-acid biosynthesis; L-isoleucine biosynthesis; L-isoleucine from 2-oxobutanoate: step 2/4. The protein operates within amino-acid biosynthesis; L-valine biosynthesis; L-valine from pyruvate: step 2/4. Functionally, involved in the biosynthesis of branched-chain amino acids (BCAA). Catalyzes an alkyl-migration followed by a ketol-acid reduction of (S)-2-acetolactate (S2AL) to yield (R)-2,3-dihydroxy-isovalerate. In the isomerase reaction, S2AL is rearranged via a Mg-dependent methyl migration to produce 3-hydroxy-3-methyl-2-ketobutyrate (HMKB). In the reductase reaction, this 2-ketoacid undergoes a metal-dependent reduction by NADPH to yield (R)-2,3-dihydroxy-isovalerate. The protein is Ketol-acid reductoisomerase (NADP(+)) 2 of Bacillus cereus (strain ATCC 10987 / NRS 248).